Consider the following 206-residue polypeptide: Pyridoxine/pyridoxamine 5'-phosphate oxidase (206 aa).

FMN contacts are provided by residues 54-59 (RVVLLK), 69-70 (YT), arginine 75, lysine 76, and glutamine 98. Lysine 59 lines the substrate pocket. Residues tyrosine 116, arginine 120, and serine 124 each coordinate substrate. FMN contacts are provided by residues 133 to 134 (QS) and tryptophan 178. 184–186 (RLH) provides a ligand contact to substrate. Arginine 188 is an FMN binding site.

This sequence belongs to the pyridoxamine 5'-phosphate oxidase family. Homodimer. FMN serves as cofactor.

The catalysed reaction is pyridoxamine 5'-phosphate + O2 + H2O = pyridoxal 5'-phosphate + H2O2 + NH4(+). It catalyses the reaction pyridoxine 5'-phosphate + O2 = pyridoxal 5'-phosphate + H2O2. The protein operates within cofactor metabolism; pyridoxal 5'-phosphate salvage; pyridoxal 5'-phosphate from pyridoxamine 5'-phosphate: step 1/1. It functions in the pathway cofactor metabolism; pyridoxal 5'-phosphate salvage; pyridoxal 5'-phosphate from pyridoxine 5'-phosphate: step 1/1. In terms of biological role, catalyzes the oxidation of either pyridoxine 5'-phosphate (PNP) or pyridoxamine 5'-phosphate (PMP) into pyridoxal 5'-phosphate (PLP). This Anaplasma phagocytophilum (strain HZ) protein is Pyridoxine/pyridoxamine 5'-phosphate oxidase.